Reading from the N-terminus, the 182-residue chain is MSKQLTAQAPVEPIVLGKMGSSYGIRGWLRVFSSTEDAESIFDYQPWFIQKAGQWQQVQLESWKHHNQDLIIKLKGVDDRDSANLLTNCEIVVDSSQLPALEDGSYYWKDLMGCQVVTTEGYDLGKVVDMMETGSNDVIVIKANLKDAFGIKERLVPFLDGQVIKKVDLATRTIEVDWDPGF.

The PRC barrel domain maps to 103 to 182; the sequence is DGSYYWKDLM…TIEVDWDPGF (80 aa).

The protein belongs to the RimM family. In terms of assembly, binds ribosomal protein uS19.

It is found in the cytoplasm. An accessory protein needed during the final step in the assembly of 30S ribosomal subunit, possibly for assembly of the head region. Essential for efficient processing of 16S rRNA. May be needed both before and after RbfA during the maturation of 16S rRNA. It has affinity for free ribosomal 30S subunits but not for 70S ribosomes. The sequence is that of Ribosome maturation factor RimM from Citrobacter koseri (strain ATCC BAA-895 / CDC 4225-83 / SGSC4696).